The following is a 198-amino-acid chain: Putative mycofactocin biosynthesis transcriptional regulator MftR (198 aa).

In terms of domain architecture, HTH tetR-type spans 12–72; the sequence is STTPHHISDV…GDFSTHLAQL (61 aa). A DNA-binding region (H-T-H motif) is located at residues 35–54; that stretch reads SVDDIARAAGIARRTLFRYY.

In terms of biological role, may regulate a gene cluster involved in mycofactocin expression. Mycofactocin is a conserved polypeptide that might serve as an electron carrier. The protein is Putative mycofactocin biosynthesis transcriptional regulator MftR (mftR) of Mycobacterium tuberculosis (strain ATCC 25618 / H37Rv).